The chain runs to 346 residues: Phosphoribosylformylglycinamidine cyclo-ligase (346 aa).

The protein belongs to the AIR synthase family.

The protein localises to the cytoplasm. The enzyme catalyses 2-formamido-N(1)-(5-O-phospho-beta-D-ribosyl)acetamidine + ATP = 5-amino-1-(5-phospho-beta-D-ribosyl)imidazole + ADP + phosphate + H(+). Its pathway is purine metabolism; IMP biosynthesis via de novo pathway; 5-amino-1-(5-phospho-D-ribosyl)imidazole from N(2)-formyl-N(1)-(5-phospho-D-ribosyl)glycinamide: step 2/2. The chain is Phosphoribosylformylglycinamidine cyclo-ligase from Prochlorococcus marinus (strain NATL2A).